Here is a 977-residue protein sequence, read N- to C-terminus: Mast/stem cell growth factor receptor Kit (977 aa).

The signal sequence occupies residues 1 to 25 (MRGARGAWDFLFVLLLLLLVQTGSS). Residues 26–525 (QPSVSPGELS…QIHAHTLFTP (500 aa)) are Extracellular-facing. 5 Ig-like C2-type domains span residues 27–112 (PSVS…VFVR), 121–205 (DLPL…LKVR), 212–309 (PVVS…LEVV), 318–411 (PMMN…VYVN), and 414–508 (PEIL…FNFA). Cys58 and Cys97 are disulfide-bonded. Residues Asn94, Asn130, and Asn145 are each glycosylated (N-linked (GlcNAc...) asparagine). 3 cysteine pairs are disulfide-bonded: Cys136–Cys186, Cys151–Cys183, and Cys233–Cys291. Residues Asn284, Asn294, Asn301, Asn321, Asn353, Asn368, Asn401, Asn464, and Asn487 are each glycosylated (N-linked (GlcNAc...) asparagine). Cys429 and Cys492 are joined by a disulfide. Residues 526–546 (LLIGFVIAAGLMCIFVMILTY) form a helical membrane-spanning segment. The Cytoplasmic segment spans residues 547–977 (KYLQKPMYEV…TQPLLVHEDV (431 aa)). A phosphotyrosine mark is found at Tyr548 and Tyr554. Position 569 (Tyr569) interacts with Mg(2+). Phosphotyrosine; by autocatalysis occurs at positions 569 and 571. An important for interaction with phosphotyrosine-binding proteins region spans residues 569-571 (YVY). The region spanning 590–938 (LSFGKTLGAG…ISESTNHIYS (349 aa)) is the Protein kinase domain. ATP contacts are provided by residues 597 to 604 (GAGAFGKV), Lys624, and 672 to 678 (EYCCYGD). Tyr704 and Tyr722 each carry phosphotyrosine; by autocatalysis. Position 731 is a phosphotyrosine (Tyr731). 2 positions are modified to phosphoserine; by PKC/PRKCA: Ser742 and Ser747. The active-site Proton acceptor is the Asp793. ATP is bound at residue Arg797. Positions 798 and 811 each coordinate Mg(2+). The residue at position 822 (Ser822) is a Phosphoserine. At Tyr824 the chain carries Phosphotyrosine; by autocatalysis. Ser892 carries the phosphoserine modification. The residue at position 901 (Tyr901) is a Phosphotyrosine. A Phosphotyrosine; by autocatalysis modification is found at Tyr937. Residue Ser960 is modified to Phosphoserine.

Belongs to the protein kinase superfamily. Tyr protein kinase family. CSF-1/PDGF receptor subfamily. Monomer in the absence of bound KITLG/SCF. Homodimer in the presence of bound KITLG/SCF, forming a heterotetramer with two KITLG/SCF molecules. Interacts (via phosphorylated tyrosine residues) with the adapter proteins GRB2 and GRB7 (via SH2 domain), and SH2B2/APS. Interacts (via C-terminus) with MPDZ (via the tenth PDZ domain). Interacts (via phosphorylated tyrosine residues) with PIK3R1 and PIK3CD. Interacts (via phosphorylated tyrosine) with CRK (isoform Crk-II), FYN, SHC1 and MATK/CHK (via SH2 domain). Interacts with LYN and FES/FPS. Interacts (via phosphorylated tyrosine residues) with the protein phosphatases PTPN6/SHP-1 (via SH2 domain), PTPN11/SHP-2 (via SH2 domain) and PTPRU. Interacts with PLCG1. Interacts with DOK1 and TEC. Interacts with IL1RAP (independent of stimulation with KITLG/SCF). A mast cell-specific KITLG/SCF-induced interleukin-33 signaling complex contains IL1RL1, IL1RAP, KIT and MYD88. Post-translationally, ubiquitinated by SOCS6. KIT is rapidly ubiquitinated after autophosphorylation induced by KITLG/SCF binding, leading to internalization and degradation. Autophosphorylated on tyrosine residues. KITLG/SCF binding promotes autophosphorylation. Phosphorylated tyrosine residues are important for interaction with specific binding partners.

The protein localises to the cell membrane. It carries out the reaction L-tyrosyl-[protein] + ATP = O-phospho-L-tyrosyl-[protein] + ADP + H(+). Present in an inactive conformation in the absence of bound ligand. KITLG/SCF binding leads to dimerization and activation by autophosphorylation on tyrosine residues. Activity is down-regulated by PRKCA-mediated phosphorylation on serine residues. Its function is as follows. Tyrosine-protein kinase that acts as a cell-surface receptor for the cytokine KITLG/SCF and plays an essential role in the regulation of cell survival and proliferation, hematopoiesis, stem cell maintenance, gametogenesis, mast cell development, migration and function, and in melanogenesis. In response to KITLG/SCF binding, KIT can activate several signaling pathways. Phosphorylates PIK3R1, PLCG1, SH2B2/APS and CBL. Activates the AKT1 signaling pathway by phosphorylation of PIK3R1, the regulatory subunit of phosphatidylinositol 3-kinase. Activated KIT also transmits signals via GRB2 and activation of RAS, RAF1 and the MAP kinases MAPK1/ERK2 and/or MAPK3/ERK1. Promotes activation of STAT family members STAT1, STAT3, STAT5A and STAT5B. Activation of PLCG1 leads to the production of the cellular signaling molecules diacylglycerol and inositol 1,4,5-trisphosphate. KIT signaling is modulated by protein phosphatases, and by rapid internalization and degradation of the receptor. Activated KIT promotes phosphorylation of the protein phosphatases PTPN6/SHP-1 and PTPRU, and of the transcription factors STAT1, STAT3, STAT5A and STAT5B. Promotes phosphorylation of PIK3R1, CBL, CRK (isoform Crk-II), LYN, MAPK1/ERK2 and/or MAPK3/ERK1, PLCG1, SRC and SHC1. This Bos taurus (Bovine) protein is Mast/stem cell growth factor receptor Kit (KIT).